Reading from the N-terminus, the 192-residue chain is Imidazoleglycerol-phosphate dehydratase (192 aa).

Belongs to the imidazoleglycerol-phosphate dehydratase family.

The protein localises to the cytoplasm. It catalyses the reaction D-erythro-1-(imidazol-4-yl)glycerol 3-phosphate = 3-(imidazol-4-yl)-2-oxopropyl phosphate + H2O. Its pathway is amino-acid biosynthesis; L-histidine biosynthesis; L-histidine from 5-phospho-alpha-D-ribose 1-diphosphate: step 6/9. The polypeptide is Imidazoleglycerol-phosphate dehydratase (Staphylococcus saprophyticus subsp. saprophyticus (strain ATCC 15305 / DSM 20229 / NCIMB 8711 / NCTC 7292 / S-41)).